A 3132-amino-acid polypeptide reads, in one-letter code: Enniatin synthetase (3132 aa).

The interval 53–466 (ADDKQRAVGH…VEKVDMMTQE (414 aa)) is condensation 1. The segment at 186 to 212 (NDEHPRQFETPDSSQATPEEDLQPNPS) is disordered. The adenylation 1 stretch occupies residues 495–887 (SQSPNKAAVA…GRMDSQVKIR (393 aa)). The tract at residues 994–1013 (SQKTHSTPSQQSQAAISSGT) is disordered. The region spanning 1010–1086 (SSGTDTETKL…GLKAIVIGTS (77 aa)) is the Carrier 1 domain. Ser-1047 carries the O-(pantetheine 4'-phosphoryl)serine modification. The interval 1105–1534 (SYAQNRMWFL…ETCISVLPLT (430 aa)) is condensation 2. An adenylation 2 region spans residues 1563-1960 (FREQAAANPE…GRMDNQFKIR (398 aa)). The segment at 2021-2177 (EGWQDHFESG…YLAEVIDGLI (157 aa)) is S-adenosyl-L-methionine-dependent N-methyltransferase. Carrier domains lie at 2504–2578 (FPIS…RQGL) and 2598–2672 (APRT…ESSH). Ser-2538 and Ser-2632 each carry O-(pantetheine 4'-phosphoryl)serine. The tract at residues 2719–3124 (QDVYPSTQMQ…RHVLEEVCKT (406 aa)) is condensation 3.

This sequence belongs to the NRP synthetase family. It depends on pantetheine 4'-phosphate as a cofactor.

It functions in the pathway antibiotic biosynthesis; enniatin biosynthesis. Its function is as follows. Nonribosomal peptide synthetase that synthesizes enniatin by coupling three D-hydroxycarboxylic acids and three L-amino acids via amide and ester bonds in an alternating fashion. Whereas ESYN1 can accept different amino acids as precursors (L-valine, L-isoleucine or L-leucine), only one species of D-hydroxycarboxylic acid can be found in natural enniatin isolates (D-hydroxyisovaleric acid, D-Hiv). D-Hiv stems from L-valine deanimation by a valine aminotransferase to 2-keto-isovaleric acid (2-Kiv), which becomes subsequently reduced by a keto-isovaleric acid reductase (KivR) to D-Hiv. This Fusarium oxysporum (Fusarium vascular wilt) protein is Enniatin synthetase.